Here is a 327-residue protein sequence, read N- to C-terminus: Tagatose 1,6-diphosphate aldolase 2 (327 aa).

Belongs to the aldolase LacD family.

It catalyses the reaction D-tagatofuranose 1,6-bisphosphate = D-glyceraldehyde 3-phosphate + dihydroxyacetone phosphate. Its pathway is carbohydrate metabolism; D-tagatose 6-phosphate degradation; D-glyceraldehyde 3-phosphate and glycerone phosphate from D-tagatose 6-phosphate: step 2/2. This chain is Tagatose 1,6-diphosphate aldolase 2, found in Streptococcus pyogenes serotype M6 (strain ATCC BAA-946 / MGAS10394).